The sequence spans 315 residues: Indoleacetate decarboxylase activating enzyme (315 aa).

The Radical SAM core domain occupies 21-311; that stretch reads HDGPGIRTNV…ADIIEAHGVK (291 aa). Cys35, Cys39, Cys42, Cys61, Cys64, Cys67, Cys71, Cys98, Cys101, Cys106, and Cys110 together coordinate [4Fe-4S] cluster. 2 consecutive 4Fe-4S ferredoxin-type domains span residues 52-81 and 89-120; these read PQLL…AITD and GYVH…IAGE. S-adenosyl-L-methionine contacts are provided by residues Gly149, 198–200, and His271; that span reads DCK.

The protein belongs to the organic radical-activating enzymes family. [4Fe-4S] cluster serves as cofactor.

It carries out the reaction glycyl-[protein] + reduced [flavodoxin] + S-adenosyl-L-methionine = glycin-2-yl radical-[protein] + semiquinone [flavodoxin] + 5'-deoxyadenosine + L-methionine + H(+). In terms of biological role, catalyzes activation of the indoleacetate decarboxylase OsIAD under anaerobic conditions by generation of an organic free radical on a glycine residue, via a homolytic cleavage of S-adenosyl-L-methionine (SAM). The protein is Indoleacetate decarboxylase activating enzyme of Tractidigestivibacter scatoligenes (Olsenella scatoligenes).